Here is a 304-residue protein sequence, read N- to C-terminus: Acetyl-coenzyme A carboxylase carboxyl transferase subunit beta (304 aa).

A CoA carboxyltransferase N-terminal domain is found at 25–294 (LWIKCPETGE…KAIKRDTATE (270 aa)).

The protein belongs to the AccD/PCCB family. In terms of assembly, acetyl-CoA carboxylase is a heterohexamer composed of biotin carboxyl carrier protein (AccB), biotin carboxylase (AccC) and two subunits each of ACCase subunit alpha (AccA) and ACCase subunit beta (AccD).

The protein localises to the cytoplasm. It catalyses the reaction N(6)-carboxybiotinyl-L-lysyl-[protein] + acetyl-CoA = N(6)-biotinyl-L-lysyl-[protein] + malonyl-CoA. Its pathway is lipid metabolism; malonyl-CoA biosynthesis; malonyl-CoA from acetyl-CoA: step 1/1. Functionally, component of the acetyl coenzyme A carboxylase (ACC) complex. Biotin carboxylase (BC) catalyzes the carboxylation of biotin on its carrier protein (BCCP) and then the CO(2) group is transferred by the transcarboxylase to acetyl-CoA to form malonyl-CoA. This is Acetyl-coenzyme A carboxylase carboxyl transferase subunit beta from Sinorhizobium medicae (strain WSM419) (Ensifer medicae).